Here is a 400-residue protein sequence, read N- to C-terminus: tRNA-specific 2-thiouridylase MnmA (400 aa).

ATP-binding positions include 19 to 26 (AMSGGVDS) and Leu45. The Nucleophile role is filled by Cys113. A disulfide bridge connects residues Cys113 and Cys210. Gly137 is a binding site for ATP. Residues 160–162 (RDQ) form an interaction with tRNA region. The Cysteine persulfide intermediate role is filled by Cys210.

Belongs to the MnmA/TRMU family.

Its subcellular location is the cytoplasm. It carries out the reaction S-sulfanyl-L-cysteinyl-[protein] + uridine(34) in tRNA + AH2 + ATP = 2-thiouridine(34) in tRNA + L-cysteinyl-[protein] + A + AMP + diphosphate + H(+). Functionally, catalyzes the 2-thiolation of uridine at the wobble position (U34) of tRNA, leading to the formation of s(2)U34. The chain is tRNA-specific 2-thiouridylase MnmA from Nitrobacter hamburgensis (strain DSM 10229 / NCIMB 13809 / X14).